A 94-amino-acid polypeptide reads, in one-letter code: MLRLDLQFFASKKGVGSTKNGRDSEAKRLGAKRADGQFVTGGSILYRQRGTKIYPGENVGRGGDDTLFAKIDGTVKFERFGRDRKKVSVYPVAQ.

A propeptide spanning residues 1-9 (MLRLDLQFF) is cleaved from the precursor.

Belongs to the bacterial ribosomal protein bL27 family. Part of the 50S ribosomal subunit. In terms of processing, the N-terminus is cleaved by ribosomal processing cysteine protease Prp.

In terms of biological role, plays a role in sporulation at high temperatures. In Bacillus subtilis (strain 168), this protein is Large ribosomal subunit protein bL27 (rpmA).